A 206-amino-acid chain; its full sequence is Holliday junction branch migration complex subunit RuvA (206 aa).

Positions 1–67 (MIASIFGKIT…QILEEGFAFN (67 aa)) are domain I. Residues 68 to 141 (TLEEKEWFSK…YDRDDGGKRI (74 aa)) form a domain II region. The interval 141–145 (IKPNT) is flexible linker. The interval 146 to 206 (AMANDYDEMF…QNNEVTNKTA (61 aa)) is domain III.

It belongs to the RuvA family. As to quaternary structure, homotetramer. Forms an RuvA(8)-RuvB(12)-Holliday junction (HJ) complex. HJ DNA is sandwiched between 2 RuvA tetramers; dsDNA enters through RuvA and exits via RuvB. An RuvB hexamer assembles on each DNA strand where it exits the tetramer. Each RuvB hexamer is contacted by two RuvA subunits (via domain III) on 2 adjacent RuvB subunits; this complex drives branch migration. In the full resolvosome a probable DNA-RuvA(4)-RuvB(12)-RuvC(2) complex forms which resolves the HJ.

Its subcellular location is the cytoplasm. Its function is as follows. The RuvA-RuvB-RuvC complex processes Holliday junction (HJ) DNA during genetic recombination and DNA repair, while the RuvA-RuvB complex plays an important role in the rescue of blocked DNA replication forks via replication fork reversal (RFR). RuvA specifically binds to HJ cruciform DNA, conferring on it an open structure. The RuvB hexamer acts as an ATP-dependent pump, pulling dsDNA into and through the RuvAB complex. HJ branch migration allows RuvC to scan DNA until it finds its consensus sequence, where it cleaves and resolves the cruciform DNA. This Mycoplasma pneumoniae (strain ATCC 29342 / M129 / Subtype 1) (Mycoplasmoides pneumoniae) protein is Holliday junction branch migration complex subunit RuvA.